Consider the following 186-residue polypeptide: Peptide deformylase (186 aa).

Residues C113 and H156 each contribute to the Fe cation site. Residue E157 is part of the active site. H160 contacts Fe cation.

It belongs to the polypeptide deformylase family. Fe(2+) serves as cofactor.

It catalyses the reaction N-terminal N-formyl-L-methionyl-[peptide] + H2O = N-terminal L-methionyl-[peptide] + formate. In terms of biological role, removes the formyl group from the N-terminal Met of newly synthesized proteins. Requires at least a dipeptide for an efficient rate of reaction. N-terminal L-methionine is a prerequisite for activity but the enzyme has broad specificity at other positions. The sequence is that of Peptide deformylase from Limosilactobacillus reuteri (strain DSM 20016) (Lactobacillus reuteri).